The primary structure comprises 468 residues: MVKRSSHRQVVLDEDDEENYNNNLDDEKMEVLLIPQSNSTTFASSDATQMYKKSRISSNSENKKQIPDTKTLLETFQKIKKTLECPICTEALQRPFTTHCGHTYCYECLLNWLKESKSCPTCRQKLYTQPSPAYLVYEIMNVVAASNSGFPLVGINENPAKKQKEVLFDGMFKQEDSHYPRSILVDSEDGVLRCARCQWELENPYHCDHCGFQISDDQDSGREWFWDGENAESDSSLNGDNTRGGNISTNRAFNNMGHAPITAVPQDWLRFDEGEEFVGSDLESDFSGPGEYDVDDGFIDNRATSQLSPVESDDDFVAPVNGSNGNGITALDSTDSEEIDIMNGFDEERDSGGTNMVSRSETCYNDGQRYDELRRELADIQNESLDSLNSSSNNSPSHNNIHSRQHPFSSDEDEGNIVTNGTGLRSSQSSSQNRGFDLEPYSEVFTASYPRRQARRTRTIQLDSDEES.

A disordered region spans residues 1-22 (MVKRSSHRQVVLDEDDEENYNN). The segment at 85-123 (CPICTEALQRPFTTHCGHTYCYECLLNWLKESKSCPTCR) adopts an RING-type zinc-finger fold. The span at 386–402 (DSLNSSSNNSPSHNNIH) shows a compositional bias: low complexity. The interval 386–468 (DSLNSSSNNS…TIQLDSDEES (83 aa)) is disordered. A compositionally biased stretch (polar residues) spans 417 to 434 (IVTNGTGLRSSQSSSQNR).

It localises to the nucleus. This is an uncharacterized protein from Schizosaccharomyces pombe (strain 972 / ATCC 24843) (Fission yeast).